Reading from the N-terminus, the 1009-residue chain is Type VII secretion system accessory factor EsaA (1009 aa).

The helical transmembrane segment at 7–27 (IYALIVTLIIIIAIVSMIFFV) threads the bilayer. The span at 680–697 (TFAEEPQEPKIDKGKNDE) shows a compositional bias: basic and acidic residues. Residues 680 to 707 (TFAEEPQEPKIDKGKNDEFNTMSSNLDK) are disordered. The next 5 membrane-spanning stretches (helical) occupy residues 822–842 (ISPT…AYIF), 869–889 (VITS…VGLI), 903–923 (KFIL…TYLL), 928–948 (SIGM…MNNL), and 979–999 (IGLV…LNMF).

Belongs to the EsaA family. Homodimer. Interacts with EssB.

It localises to the cell membrane. Its function is as follows. Component of the type VII secretion system (Ess). Provides together with EssB and other components such as EssC and EssE a secretion plateform accross the cytoplasmic membrane in the host. In Staphylococcus aureus (strain USA300), this protein is Type VII secretion system accessory factor EsaA.